Reading from the N-terminus, the 330-residue chain is Free fatty acid receptor 2 (330 aa).

The Extracellular segment spans residues 1–12 (MLPDWKSSLILM). The helical transmembrane segment at 13–33 (AYIIIFLTGLPANLLALRAFV) threads the bilayer. The Cytoplasmic segment spans residues 34–41 (GRIRQPQP). A helical transmembrane segment spans residues 42–62 (APVHILLLSLTLADLLLLLLL). Residues 63-84 (PFKIIEAASNFRWYLPKVVCAL) are Extracellular-facing. The chain crosses the membrane as a helical span at residues 85 to 105 (TSFGFYSSIYCSTWLLAGISI). The Cytoplasmic segment spans residues 106 to 126 (ERYLGVAFPVQYKLSRRPLYG). The helical transmembrane segment at 127–147 (VIAALVAWVMSFGHCTIVIIV) threads the bilayer. Over 148–173 (QYLNTTEQVRSGNEITCYENFTDNQL) the chain is Extracellular. N-linked (GlcNAc...) asparagine glycosylation is found at N151 and N167. Residues 174 to 194 (DVVLPVRLELCLVLFFIPMAV) traverse the membrane as a helical segment. The Cytoplasmic portion of the chain corresponds to 195–219 (TIFCYWRFVWIMLSQPLVGAQRRRR). Residues 220-240 (AVGLAVVTLLNFLVCFGPYNV) form a helical membrane-spanning segment. Over 241–255 (SHLVGYHQRKSPWWR) the chain is Extracellular. The chain crosses the membrane as a helical span at residues 256 to 276 (SIAVVFSSLNASLDPLLFYFS). The Cytoplasmic segment spans residues 277–330 (SSVVRRAFGRGLQVLRNQGSSLLGRRGKDTAEGTNEDRGVGQGEGMPSSDFTTE). The segment at 299 to 330 (LGRRGKDTAEGTNEDRGVGQGEGMPSSDFTTE) is disordered. A compositionally biased stretch (basic and acidic residues) spans 302–315 (RGKDTAEGTNEDRG).

This sequence belongs to the G-protein coupled receptor 1 family. Interacts with FCN1 (via Fibrinogen C-terminal domain). In terms of tissue distribution, expressed at relatively high levels in peripheral blood leukocytes and, to lesser extent, in spleen.

Its subcellular location is the cell membrane. In terms of biological role, g protein-coupled receptor that is activated by a major product of dietary fiber digestion, the short chain fatty acids (SCFAs), and that plays a role in the regulation of whole-body energy homeostasis and in intestinal immunity. In omnivorous mammals, the short chain fatty acids acetate, propionate and butyrate are produced primarily by the gut microbiome that metabolizes dietary fibers. SCFAs serve as a source of energy but also act as signaling molecules. That G protein-coupled receptor is probably coupled to the pertussis toxin-sensitive, G(i/o)-alpha family of G proteins but also to the Gq family. Its activation results in the formation of inositol 1,4,5-trisphosphate, the mobilization of intracellular calcium, the phosphorylation of the MAPK3/ERK1 and MAPK1/ERK2 kinases and the inhibition of intracellular cAMP accumulation. May play a role in glucose homeostasis by regulating the secretion of GLP-1, in response to short-chain fatty acids accumulating in the intestine. May also regulate the production of LEP/Leptin, a hormone acting on the central nervous system to inhibit food intake. Finally, may also regulate whole-body energy homeostasis through adipogenesis regulating both differentiation and lipid storage of adipocytes. In parallel to its role in energy homeostasis, may also mediate the activation of the inflammatory and immune responses by SCFA in the intestine, regulating the rapid production of chemokines and cytokines. May also play a role in the resolution of the inflammatory response and control chemotaxis in neutrophils. In addition to SCFAs, may also be activated by the extracellular lectin FCN1 in a process leading to activation of monocytes and inducing the secretion of interleukin-8/IL-8 in response to the presence of microbes. Among SCFAs, the fatty acids containing less than 6 carbons, the most potent activators are probably acetate, propionate and butyrate. Exhibits a SCFA-independent constitutive G protein-coupled receptor activity. This chain is Free fatty acid receptor 2 (FFAR2), found in Homo sapiens (Human).